A 223-amino-acid polypeptide reads, in one-letter code: Deoxyribose-phosphate aldolase 2 (223 aa).

D89 acts as the Proton donor/acceptor in catalysis. The active-site Schiff-base intermediate with acetaldehyde is the K152. K181 functions as the Proton donor/acceptor in the catalytic mechanism.

It belongs to the DeoC/FbaB aldolase family. DeoC type 1 subfamily.

It is found in the cytoplasm. It catalyses the reaction 2-deoxy-D-ribose 5-phosphate = D-glyceraldehyde 3-phosphate + acetaldehyde. It participates in carbohydrate degradation; 2-deoxy-D-ribose 1-phosphate degradation; D-glyceraldehyde 3-phosphate and acetaldehyde from 2-deoxy-alpha-D-ribose 1-phosphate: step 2/2. Functionally, catalyzes a reversible aldol reaction between acetaldehyde and D-glyceraldehyde 3-phosphate to generate 2-deoxy-D-ribose 5-phosphate. The protein is Deoxyribose-phosphate aldolase 2 of Bacillus licheniformis (strain ATCC 14580 / DSM 13 / JCM 2505 / CCUG 7422 / NBRC 12200 / NCIMB 9375 / NCTC 10341 / NRRL NRS-1264 / Gibson 46).